The primary structure comprises 440 residues: MIKEIISQYQNKSFLVAYSGGLDSTVLLYKLLEIKKKYYIKIRAIHINHNLTLLSKKWSEHCKKICNINHIPLIVENINIKNKTNNLEEKLRIKRYNIIYNHLFSDEILLTGHHINDQCETFFLSLKRGSGPTGLSSMSFETLFGTKKIVRPFLKKTKIELQTWAKKKKLHWIEDFSNLNIDYDRNFIRNEVIPILEKRWSYFLKNCFRTTIICQQETRLLNDFLRERIYKLIKFDDSLNIENFKNIKQAMCTALIRYWLLLKKIKMPSYKNIQCIYRQMIFSRIDSNPKIILGKHEVRRYKQSLHFIKTQPSLKNTLLFWHKNNIKLTLPNNLGYLIKNNNGTVLPGPKENELINIRFQYEGYVLILGRSKKRKIKKIWQEKNIPPWLRNQIPLLFYNNYFISAIGVFVVNIKNKNRTKCIISWQNDLKSTTNNFFSFY.

19–24 (SGGLDS) is an ATP binding site.

It belongs to the tRNA(Ile)-lysidine synthase family.

Its subcellular location is the cytoplasm. It catalyses the reaction cytidine(34) in tRNA(Ile2) + L-lysine + ATP = lysidine(34) in tRNA(Ile2) + AMP + diphosphate + H(+). In terms of biological role, ligates lysine onto the cytidine present at position 34 of the AUA codon-specific tRNA(Ile) that contains the anticodon CAU, in an ATP-dependent manner. Cytidine is converted to lysidine, thus changing the amino acid specificity of the tRNA from methionine to isoleucine. In Buchnera aphidicola subsp. Acyrthosiphon pisum (strain APS) (Acyrthosiphon pisum symbiotic bacterium), this protein is tRNA(Ile)-lysidine synthase.